We begin with the raw amino-acid sequence, 373 residues long: D-alanine--D-alanine ligase (373 aa).

The 208-residue stretch at 156 to 363 folds into the ATP-grasp domain; the sequence is KKLLAAEGLP…YPTLLAAMVD (208 aa). An ATP-binding site is contributed by 184–239; that stretch reads RERLGLPVFVKPARGGSSIGVSRVTAWDELPAAVALARRHDPKVIVEAAVIGRELE. Residues Asp318, Glu330, and Asn332 each coordinate Mg(2+).

Belongs to the D-alanine--D-alanine ligase family. It depends on Mg(2+) as a cofactor. Mn(2+) is required as a cofactor.

It localises to the cytoplasm. It catalyses the reaction 2 D-alanine + ATP = D-alanyl-D-alanine + ADP + phosphate + H(+). The protein operates within cell wall biogenesis; peptidoglycan biosynthesis. Functionally, cell wall formation. The chain is D-alanine--D-alanine ligase from Mycolicibacterium smegmatis (strain ATCC 700084 / mc(2)155) (Mycobacterium smegmatis).